A 147-amino-acid chain; its full sequence is Protein BUD31 homolog (147 aa).

The Nuclear localization signal motif lies at 8–12 (RRVRK).

It belongs to the BUD31 (G10) family. Identified in the spliceosome C complex.

The protein localises to the nucleus. Involved in pre-mRNA splicing process. This is Protein BUD31 homolog from Caenorhabditis elegans.